Reading from the N-terminus, the 122-residue chain is Large ribosomal subunit protein uL14c (122 aa).

The protein belongs to the universal ribosomal protein uL14 family. In terms of assembly, part of the 50S ribosomal subunit.

It localises to the plastid. Its subcellular location is the chloroplast. Functionally, binds to 23S rRNA. The polypeptide is Large ribosomal subunit protein uL14c (Nicotiana tomentosiformis (Tobacco)).